The primary structure comprises 498 residues: L-amino acid oxidase Bs29 (498 aa).

The signal sequence occupies residues 1–3; it reads SCA. Cysteines 12 and 175 form a disulfide. FAD contacts are provided by residues 45–46, 65–66, Arg73, and 89–92; these read MS, EA, and GPMR. Arg92 contacts substrate. The N-linked (GlcNAc...) asparagine glycan is linked to Asn174. Substrate is bound at residue His225. Val263 serves as a coordination point for FAD. A disulfide bridge links Cys333 with Cys414. Residue Tyr374 participates in substrate binding. FAD contacts are provided by residues Glu459 and 466 to 471; that span reads GWIDST. Residue 466–467 coordinates substrate; the sequence is GW.

The protein belongs to the flavin monoamine oxidase family. FIG1 subfamily. As to quaternary structure, monomer. This is in contrast with most of its orthologs, that are non-covalently linked homodimers. The cofactor is FAD. As to expression, expressed by the venom gland.

The protein localises to the secreted. It carries out the reaction an L-alpha-amino acid + O2 + H2O = a 2-oxocarboxylate + H2O2 + NH4(+). It catalyses the reaction L-leucine + O2 + H2O = 4-methyl-2-oxopentanoate + H2O2 + NH4(+). Catalyzes an oxidative deamination of predominantly hydrophobic and aromatic L-amino acids, thus producing hydrogen peroxide that may contribute to the diverse toxic effects of this enzyme. Shows activity on L-Leu. Damage cell membranes of the Gram-positive bacteria S.aureus (MIC=4 ug/ml and MBC=8 ug/ml) and the Gram-negative bacteria A.baumanni (MIC=2 ug/ml and MBC=4 ug/ml). This antibacterial activity is dependent on the production of hydrogen peroxyde, since it is inhibited by catalase, a hydrogen peroxyde scavenger. The chain is L-amino acid oxidase Bs29 from Bothriechis schlegelii (Eyelash palm pitviper).